The following is a 98-amino-acid chain: uncharacterized protein (98 aa).

The signal sequence occupies residues 1-23; it reads MKKMQSIVLALSLVLVAPMAAQA. The disordered stretch occupies residues 68 to 98; sequence WHLHGPPPPPRHHKKAPHDHHGGHGPGKHHR. Basic residues predominate over residues 77 to 98; sequence PRHHKKAPHDHHGGHGPGKHHR.

The protein to E.coli YpeC.

This is an uncharacterized protein from Escherichia coli (strain K12).